A 587-amino-acid chain; its full sequence is D-lactate dehydrogenase [cytochrome] 1, mitochondrial (587 aa).

In terms of domain architecture, FAD-binding PCMH-type spans 146-327; that stretch reads SPEQRPRIIL…TEATVKCHVK (182 aa).

The protein belongs to the FAD-binding oxidoreductase/transferase type 4 family. The cofactor is FAD.

The protein resides in the mitochondrion inner membrane. It carries out the reaction (R)-lactate + 2 Fe(III)-[cytochrome c] = 2 Fe(II)-[cytochrome c] + pyruvate + 2 H(+). In terms of biological role, catalyzes the stereospecific oxidation of D-lactate to pyruvate. In Saccharomyces cerevisiae (strain ATCC 204508 / S288c) (Baker's yeast), this protein is D-lactate dehydrogenase [cytochrome] 1, mitochondrial.